The sequence spans 1026 residues: Multidrug resistance protein MdtC (1026 aa).

11 helical membrane passes run 15-35 (ILIAAAITLCGILGFRLLPVA), 333-353 (EVEETLAISVALVILVVFLFL), 360-380 (LIPAVAVPVSLIGTFAAMYLC), 387-407 (LSLMALTIATGFVVDDAIVVL), 431-451 (VGFTVISMSLSLVAVFLPLLL), 463-483 (FAVTLSVAIGISLVVSLTLTP), 528-548 (LVGVVFLGTVALNIWLYIAIP), 853-873 (LILIVAAIATVYIVLGILYES), 897-917 (LFNAPFSLIALIGIMLLIGIV), 953-973 (PIMMTTLAALFGALPLVLSGG), and 984-1004 (ITIVGGLVMSQLLTLYTTPVV).

Belongs to the resistance-nodulation-cell division (RND) (TC 2.A.6) family. MdtC subfamily. As to quaternary structure, part of a tripartite efflux system composed of MdtA, MdtB and MdtC. MdtC forms a heteromultimer with MdtB.

It localises to the cell inner membrane. In Salmonella agona (strain SL483), this protein is Multidrug resistance protein MdtC.